A 267-amino-acid chain; its full sequence is Undecaprenyl-diphosphatase (267 aa).

Transmembrane regions (helical) follow at residues 7 to 29, 41 to 61, 69 to 89, 96 to 116, 173 to 193, 207 to 227, and 239 to 259; these read LILG…HMIL, FWKS…IFVF, LDIW…GLFV, LFNG…FILI, AAEF…AYSI, IPLG…IKFF, and FGIY…SGIL.

This sequence belongs to the UppP family.

It is found in the cell inner membrane. It catalyses the reaction di-trans,octa-cis-undecaprenyl diphosphate + H2O = di-trans,octa-cis-undecaprenyl phosphate + phosphate + H(+). Catalyzes the dephosphorylation of undecaprenyl diphosphate (UPP). Confers resistance to bacitracin. This chain is Undecaprenyl-diphosphatase, found in Campylobacter jejuni subsp. jejuni serotype O:6 (strain 81116 / NCTC 11828).